The chain runs to 404 residues: Formate-dependent phosphoribosylglycinamide formyltransferase (404 aa).

N(1)-(5-phospho-beta-D-ribosyl)glycinamide-binding positions include 25–26 (EL) and Glu-85. ATP-binding positions include Arg-118, Lys-159, 164–169 (SSGKGQ), 199–202 (EGFI), and Glu-207. Residues 123–318 (RLAAEELGLP…EFELHARAIL (196 aa)) enclose the ATP-grasp domain. Glu-277 and Glu-289 together coordinate Mg(2+). Residues Asp-296, Lys-365, and 372–373 (RR) contribute to the N(1)-(5-phospho-beta-D-ribosyl)glycinamide site.

The protein belongs to the PurK/PurT family. In terms of assembly, homodimer.

The enzyme catalyses N(1)-(5-phospho-beta-D-ribosyl)glycinamide + formate + ATP = N(2)-formyl-N(1)-(5-phospho-beta-D-ribosyl)glycinamide + ADP + phosphate + H(+). It participates in purine metabolism; IMP biosynthesis via de novo pathway; N(2)-formyl-N(1)-(5-phospho-D-ribosyl)glycinamide from N(1)-(5-phospho-D-ribosyl)glycinamide (formate route): step 1/1. Its function is as follows. Involved in the de novo purine biosynthesis. Catalyzes the transfer of formate to 5-phospho-ribosyl-glycinamide (GAR), producing 5-phospho-ribosyl-N-formylglycinamide (FGAR). Formate is provided by PurU via hydrolysis of 10-formyl-tetrahydrofolate. The chain is Formate-dependent phosphoribosylglycinamide formyltransferase from Burkholderia mallei (strain NCTC 10247).